Consider the following 258-residue polypeptide: Indole-3-glycerol phosphate synthase (258 aa).

Belongs to the TrpC family.

The enzyme catalyses 1-(2-carboxyphenylamino)-1-deoxy-D-ribulose 5-phosphate + H(+) = (1S,2R)-1-C-(indol-3-yl)glycerol 3-phosphate + CO2 + H2O. Its pathway is amino-acid biosynthesis; L-tryptophan biosynthesis; L-tryptophan from chorismate: step 4/5. The sequence is that of Indole-3-glycerol phosphate synthase from Nautilia profundicola (strain ATCC BAA-1463 / DSM 18972 / AmH).